The chain runs to 476 residues: NADH-quinone oxidoreductase subunit N (476 aa).

The next 13 membrane-spanning stretches (helical) occupy residues 7–27, 33–53, 59–79, 100–120, 122–142, 156–176, 199–219, 237–257, 265–285, 305–325, 363–383, 399–419, and 437–457; these read LTVE…GLLV, RGIA…AFGM, VVLG…LFLV, GEYY…ASSG, LVSL…LAAF, YVLL…LVYG, LLLG…AVPF, FLSV…FFGA, WVQL…LVAI, LLLG…YYAM, VAAL…MAGF, IWLA…YLLV, and VAPG…ILGI.

This sequence belongs to the complex I subunit 2 family. As to quaternary structure, NDH-1 is composed of 14 different subunits. Subunits NuoA, H, J, K, L, M, N constitute the membrane sector of the complex.

The protein localises to the cell membrane. It catalyses the reaction a quinone + NADH + 5 H(+)(in) = a quinol + NAD(+) + 4 H(+)(out). In terms of biological role, NDH-1 shuttles electrons from NADH, via FMN and iron-sulfur (Fe-S) centers, to quinones in the respiratory chain. The immediate electron acceptor for the enzyme in this species is believed to be a menaquinone. Couples the redox reaction to proton translocation (for every two electrons transferred, four hydrogen ions are translocated across the cytoplasmic membrane), and thus conserves the redox energy in a proton gradient. In Moorella thermoacetica (strain ATCC 39073 / JCM 9320), this protein is NADH-quinone oxidoreductase subunit N.